Here is a 318-residue protein sequence, read N- to C-terminus: Serine protease 41 (318 aa).

Positions 1-19 are cleaved as a signal peptide; that stretch reads MGARGALLLALLLARAGLG. The propeptide occupies 20–54; it reads KPGELGALQAGPGAARRPGGGGREEACGHREIHAL. The region spanning 55–297 is the Peptidase S1 domain; that stretch reads VAGGVESARG…YFHWIRRVMS (243 aa). C80 and C96 are disulfide-bonded. Residues H95 and D147 each act as charge relay system in the active site. 3 disulfides stabilise this stretch: C181–C255, C215–C234, and C245–C273. N-linked (GlcNAc...) asparagine glycosylation occurs at N211. Catalysis depends on S249, which acts as the Charge relay system. N284 is a glycosylation site (N-linked (GlcNAc...) asparagine). Residue S299 is the site of GPI-anchor amidated serine attachment. The propeptide at 300–318 is removed in mature form; sequence TPRPNPSQLLLLLALLWAP.

Belongs to the peptidase S1 family. N-glycosylated.

Its subcellular location is the cell membrane. This chain is Serine protease 41, found in Homo sapiens (Human).